Reading from the N-terminus, the 941-residue chain is Bifunctional glutamine synthetase adenylyltransferase/adenylyl-removing enzyme (941 aa).

The tract at residues 1 to 437 (MSIPTASLSP…TAEFAELLAP (437 aa)) is adenylyl removase. An adenylyl transferase region spans residues 444 to 941 (PDTLADYWRA…FPLGKDEAAL (498 aa)).

Belongs to the GlnE family. Mg(2+) is required as a cofactor.

The catalysed reaction is [glutamine synthetase]-O(4)-(5'-adenylyl)-L-tyrosine + phosphate = [glutamine synthetase]-L-tyrosine + ADP. It catalyses the reaction [glutamine synthetase]-L-tyrosine + ATP = [glutamine synthetase]-O(4)-(5'-adenylyl)-L-tyrosine + diphosphate. Functionally, involved in the regulation of glutamine synthetase GlnA, a key enzyme in the process to assimilate ammonia. When cellular nitrogen levels are high, the C-terminal adenylyl transferase (AT) inactivates GlnA by covalent transfer of an adenylyl group from ATP to specific tyrosine residue of GlnA, thus reducing its activity. Conversely, when nitrogen levels are low, the N-terminal adenylyl removase (AR) activates GlnA by removing the adenylyl group by phosphorolysis, increasing its activity. The regulatory region of GlnE binds the signal transduction protein PII (GlnB) which indicates the nitrogen status of the cell. This is Bifunctional glutamine synthetase adenylyltransferase/adenylyl-removing enzyme from Xanthomonas oryzae pv. oryzae (strain MAFF 311018).